Here is an 867-residue protein sequence, read N- to C-terminus: Bifunctional diterpene synthase, chloroplastic (867 aa).

The transit peptide at 1-55 (MAKVLFSSFQQTGISGSLKSGQLSGVFINGTNLKSNAHAKRFRKNSTSSITIRCC) directs the protein to the chloroplast. A substrate-binding site is contributed by K255. Mg(2+) is bound by residues D389 and D391. The DXDD motif motif lies at 389–392 (DIDD). K474 is a substrate binding site. Residues D611, D615, N758, T762, and E766 each contribute to the Mg(2+) site. Residues 611 to 615 (DDLMD) carry the DDXXD motif motif.

This sequence belongs to the terpene synthase family. It depends on Mg(2+) as a cofactor.

The protein localises to the plastid. It localises to the chloroplast. The catalysed reaction is (+)-copalyl diphosphate = miltiradiene + diphosphate. It catalyses the reaction (2E,6E,10E)-geranylgeranyl diphosphate = (+)-copalyl diphosphate. It functions in the pathway secondary metabolite biosynthesis; terpenoid biosynthesis. Bifunctional diterpene cyclase that catalyzes the successive two-step type-B (protonation-initiated cyclization) and type-A (ionization-initiated cyclization) reactions of geranylgeranyl diphosphate (GGDP) producing successively (+)-copalyl diphosphate and miltiradiene. The protein is Bifunctional diterpene synthase, chloroplastic (MDS) of Selaginella moellendorffii (Spikemoss).